The primary structure comprises 424 residues: Cytoplasmic tRNA 2-thiolation protein 2 (424 aa).

A disordered region spans residues 357–385 (PAAPETEEEEELSKKAHMEKSQEKTGDAD). The segment covering 368 to 385 (LSKKAHMEKSQEKTGDAD) has biased composition (basic and acidic residues).

It belongs to the CTU2/NCS2 family.

It localises to the cytoplasm. It participates in tRNA modification; 5-methoxycarbonylmethyl-2-thiouridine-tRNA biosynthesis. Functionally, plays a central role in 2-thiolation of mcm(5)S(2)U at tRNA wobble positions of tRNA(Lys), tRNA(Glu) and tRNA(Gln). May act by forming a heterodimer with NCS6 that ligates sulfur from thiocarboxylated URM1 onto the uridine of tRNAs at wobble position. Prior mcm(5) tRNA modification by the elongator complex is required for 2-thiolation. May also be involved in protein urmylation. This is Cytoplasmic tRNA 2-thiolation protein 2 from Yarrowia lipolytica (strain CLIB 122 / E 150) (Yeast).